The sequence spans 554 residues: RGIFRPDRSHAKSARSVAETMGNYHPHGDASIYDTLVRMAQPWSLRYPLVDGQGNFGSPGNDPPAAMRYCVTGDALVRLPFGQSVRLRDVVAGARSSSDNAIDLKVLNRHGDPVVADKLFHSGEHETYTVRTAEGYEVTGTANHPLLCLVDVGGVPTLLWKLTEEIRPGDHVVLQRTPPTEFGPADWQDAFEALHLGAFISEGFVSENRAGFNNLDREFFNAVLTAYDTIVGGPRYVSSRTIASDSLLHELDVHNLTALKKSRLGELVGQRSADKAVPEWLWKAPAVVKRVFLQALFEGDGSCSALPRNTIQVSYSTRSGRLAKDIQQMLLEFGVISRRYVHATGEHKVVLTSRAQAELFAAQIGFGGIKQAKLQGLLDALPQAAAGRDGDYVPGLAQFVRKHSGSRWVDKDWLNRHNIDRLSRWQRDGAEILGRIADPDVRAIAQELTDGRFYYARVASVTDSGVQPVYSLRVDTDDHSFITNGFVSHNTEARLTPLAMEMLREIDEETVDFIPNYDGRVQEPTVLPSRFPNLLANGSGGIAVGMATNIPPHN.

Positions Arg1 to Asn554 constitute a Topo IIA-type catalytic domain. Tyr69 (O-(5'-phospho-DNA)-tyrosine intermediate) is an active-site residue. One can recognise a DOD-type homing endonuclease domain in the interval His195–Val335.

It belongs to the type II topoisomerase GyrA/ParC subunit family. As to quaternary structure, heterotetramer, composed of two GyrA and two GyrB chains. In the heterotetramer, GyrA contains the active site tyrosine that forms a transient covalent intermediate with DNA, while GyrB binds cofactors and catalyzes ATP hydrolysis. Post-translationally, this protein undergoes a protein self splicing that involves a post-translational excision of the intervening region (intein) followed by peptide ligation.

It localises to the cytoplasm. The catalysed reaction is ATP-dependent breakage, passage and rejoining of double-stranded DNA.. Functionally, a type II topoisomerase that negatively supercoils closed circular double-stranded (ds) DNA in an ATP-dependent manner to modulate DNA topology and maintain chromosomes in an underwound state. Negative supercoiling favors strand separation, and DNA replication, transcription, recombination and repair, all of which involve strand separation. Also able to catalyze the interconversion of other topological isomers of dsDNA rings, including catenanes and knotted rings. Type II topoisomerases break and join 2 DNA strands simultaneously in an ATP-dependent manner. This chain is DNA gyrase subunit A (gyrA), found in Mycolicibacterium flavescens (Mycobacterium flavescens).